The following is a 51-amino-acid chain: U-Asilidin(1)-Eru1a (51 aa).

Residues 1–23 (MANYIDVLSFLAIICATVLATLA) form the signal peptide. Disulfide bonds link cysteine 26-cysteine 40, cysteine 33-cysteine 44, and cysteine 39-cysteine 49.

Belongs to the asilidin-1 family. As to expression, expressed by the venom gland. The most highly expressed peptides U-Asilidin1-Mar1a is around 3000 times higher expressed in the venom thoracic glands compared to its body tissues.

Its subcellular location is the secreted. Functionally, induces neurotoxic effect on honeybees, including slow movements, disorientation and paralysis. Since it provokes similar symptoms than omega-atracotoxin, it is probable that it acts in the same way by inhibiting voltage-gated calcium channels. The polypeptide is U-Asilidin(1)-Eru1a (Eutolmus rufibarbis (Golden-tabbed robberfly)).